Here is a 560-residue protein sequence, read N- to C-terminus: Mannosyl-oligosaccharide 1,2-alpha-mannosidase MNS1 (560 aa).

The Cytoplasmic segment spans residues 1–27 (MARSRSISGYGIWKYLNPAYYLRRPRR). The chain crosses the membrane as a helical; Signal-anchor for type II membrane protein span at residues 28 to 47 (LALLFIVFVSVSMLVWDRIN). The stretch at 47-80 (NLAREHEVEVFKLNEEVSRLEQMLEELNGGVGNK) forms a coiled coil. Residues 48-560 (LAREHEVEVF…QRKFGHQINV (513 aa)) lie on the Lumenal side of the membrane. The Proton donor role is filled by E179. The active site involves D312. N-linked (GlcNAc...) asparagine glycosylation occurs at N326. C377 and C409 are oxidised to a cystine. The active-site Proton donor is E423. The active site involves E445. A glycan (N-linked (GlcNAc...) asparagine) is linked at N459. T529 is a Ca(2+) binding site.

The protein belongs to the glycosyl hydrolase 47 family. It depends on Ca(2+) as a cofactor. Mn(2+) serves as cofactor. Requires Mg(2+) as cofactor. Expressed in flowers, siliques, stems, leaves, roots, pollen grains, shoot apical meristems, hypocotyls and upper region of the root.

It is found in the golgi apparatus membrane. The catalysed reaction is N(4)-(alpha-D-Man-(1-&gt;2)-alpha-D-Man-(1-&gt;2)-alpha-D-Man-(1-&gt;3)-[alpha-D-Man-(1-&gt;2)-alpha-D-Man-(1-&gt;3)-[alpha-D-Man-(1-&gt;2)-alpha-D-Man-(1-&gt;6)]-alpha-D-Man-(1-&gt;6)]-beta-D-Man-(1-&gt;4)-beta-D-GlcNAc-(1-&gt;4)-beta-D-GlcNAc)-L-asparaginyl-[protein] (N-glucan mannose isomer 9A1,2,3B1,2,3) + 4 H2O = N(4)-(alpha-D-Man-(1-&gt;3)-[alpha-D-Man-(1-&gt;3)-[alpha-D-Man-(1-&gt;6)]-alpha-D-Man-(1-&gt;6)]-beta-D-Man-(1-&gt;4)-beta-D-GlcNAc-(1-&gt;4)-beta-D-GlcNAc)-L-asparaginyl-[protein] (N-glucan mannose isomer 5A1,2) + 4 beta-D-mannose. It carries out the reaction N(4)-(alpha-D-Man-(1-&gt;2)-alpha-D-Man-(1-&gt;2)-alpha-D-Man-(1-&gt;3)-[alpha-D-Man-(1-&gt;3)-[alpha-D-Man-(1-&gt;2)-alpha-D-Man-(1-&gt;6)]-alpha-D-Man-(1-&gt;6)]-beta-D-Man-(1-&gt;4)-beta-D-GlcNAc-(1-&gt;4)-beta-D-GlcNAc)-L-asparaginyl-[protein] (N-glucan mannose isomer 8A1,2,3B1,3) + 3 H2O = N(4)-(alpha-D-Man-(1-&gt;3)-[alpha-D-Man-(1-&gt;3)-[alpha-D-Man-(1-&gt;6)]-alpha-D-Man-(1-&gt;6)]-beta-D-Man-(1-&gt;4)-beta-D-GlcNAc-(1-&gt;4)-beta-D-GlcNAc)-L-asparaginyl-[protein] (N-glucan mannose isomer 5A1,2) + 3 beta-D-mannose. The enzyme catalyses N(4)-(alpha-D-Man-(1-&gt;2)-alpha-D-Man-(1-&gt;2)-alpha-D-Man-(1-&gt;3)-[alpha-D-Man-(1-&gt;2)-alpha-D-Man-(1-&gt;3)-[alpha-D-Man-(1-&gt;2)-alpha-D-Man-(1-&gt;6)]-alpha-D-Man-(1-&gt;6)]-beta-D-Man-(1-&gt;4)-beta-D-GlcNAc-(1-&gt;4)-beta-D-GlcNAc)-L-asparaginyl-[protein] (N-glucan mannose isomer 9A1,2,3B1,2,3) + H2O = N(4)-(alpha-D-Man-(1-&gt;2)-alpha-D-Man-(1-&gt;2)-alpha-D-Man-(1-&gt;3)-[alpha-D-Man-(1-&gt;3)-[alpha-D-Man-(1-&gt;2)-alpha-D-Man-(1-&gt;6)]-alpha-D-Man-(1-&gt;6)]-beta-D-Man-(1-&gt;4)-beta-D-GlcNAc-(1-&gt;4)-beta-D-GlcNAc)-L-asparaginyl-[protein] (N-glucan mannose isomer 8A1,2,3B1,3) + beta-D-mannose. The protein operates within protein modification; protein glycosylation. Inhibited by kifunensine and 1-deoxymannojirimycin, but not by swainsonine. Functionally, class I alpha-mannosidase essential for early N-glycan processing. Progressively trims alpha-1,2-linked mannose residues. Produces Man(5)GlcNAc(2) from Man(8)GlcNAc(2), but only Man(6)GlcNAc(2) from Man(9)GlcNAc(2). Has difficulty acting on the terminal mannose of the b-branch. Involved in root development and cell wall biosynthesis. This Arabidopsis thaliana (Mouse-ear cress) protein is Mannosyl-oligosaccharide 1,2-alpha-mannosidase MNS1 (MNS1).